A 310-amino-acid chain; its full sequence is tRNA-cytidine(32) 2-sulfurtransferase (310 aa).

The PP-loop motif signature appears at 45–50 (SGGKDS). 3 residues coordinate [4Fe-4S] cluster: cysteine 120, cysteine 123, and cysteine 211.

The protein belongs to the TtcA family. Homodimer. The cofactor is Mg(2+). Requires [4Fe-4S] cluster as cofactor.

The protein localises to the cytoplasm. It catalyses the reaction cytidine(32) in tRNA + S-sulfanyl-L-cysteinyl-[cysteine desulfurase] + AH2 + ATP = 2-thiocytidine(32) in tRNA + L-cysteinyl-[cysteine desulfurase] + A + AMP + diphosphate + H(+). It functions in the pathway tRNA modification. In terms of biological role, catalyzes the ATP-dependent 2-thiolation of cytidine in position 32 of tRNA, to form 2-thiocytidine (s(2)C32). The sulfur atoms are provided by the cysteine/cysteine desulfurase (IscS) system. The sequence is that of tRNA-cytidine(32) 2-sulfurtransferase from Shewanella oneidensis (strain ATCC 700550 / JCM 31522 / CIP 106686 / LMG 19005 / NCIMB 14063 / MR-1).